Reading from the N-terminus, the 37-residue chain is Peptide encoded by miPEP164a (37 aa).

Functionally, regulatory peptide encoded by the primary transcript (pri-miR164a) of the microRNA miR164a that enhances the accumulation of its corresponding mature miRNA. Acts probably as a transcriptional activator of its corresponding pri-miRNA. This is Peptide encoded by miPEP164a from Arabidopsis thaliana (Mouse-ear cress).